The sequence spans 150 residues: Transcriptional repressor NrdR (150 aa).

The segment at 3–34 (CPYCQFEDTRVIDSRLASEGEQVRRRRECNRC) is a zinc-finger region. Residues 49–139 (PRIVKRDGTR…VYRSFEDVSA (91 aa)) enclose the ATP-cone domain.

This sequence belongs to the NrdR family. Zn(2+) serves as cofactor.

Negatively regulates transcription of bacterial ribonucleotide reductase nrd genes and operons by binding to NrdR-boxes. This chain is Transcriptional repressor NrdR, found in Alkalilimnicola ehrlichii (strain ATCC BAA-1101 / DSM 17681 / MLHE-1).